The primary structure comprises 310 residues: Olfactory receptor 5T7 (310 aa).

Residues 1-23 (MENITEVTEFILMGFTDNADLEI) are Extracellular-facing. Asn3 carries N-linked (GlcNAc...) asparagine glycosylation. A helical transmembrane segment spans residues 24–44 (LSFFLFLAIYLFTLMGNLGLI). The Cytoplasmic portion of the chain corresponds to 45-52 (TLVIGDSR). The helical transmembrane segment at 53 to 73 (LHNPMYYFLSVLSSVDACYST) threads the bilayer. Residues 74 to 97 (VITPQMVVDFVSEKKVISFIGCAT) lie on the Extracellular side of the membrane. A disulfide bond links Cys95 and Cys187. A helical transmembrane segment spans residues 98-118 (QMFLAVTFGTTECFLLAAMAY). At 119–131 (DRYVAIHNPLMYV) the chain is on the cytoplasmic side. The chain crosses the membrane as a helical span at residues 132–152 (VSMSPRVYVPLIIASYAGGIL). Over 153-194 (HAVIHTVATFRLSFCGSNKISHIFCDIPPLLAISCSDTHFNQ) the chain is Extracellular. The helical transmembrane segment at 195 to 215 (LLLFYCAGFIEVVTILIVLLS) threads the bilayer. The Cytoplasmic portion of the chain corresponds to 216 to 235 (YGFILSVILKTRSTEGKRKV). The helical transmembrane segment at 236–256 (FSTCGSHLMAVSTFHGTVLFM) threads the bilayer. Residues 257-269 (YVRPSDSYALEHD) lie on the Extracellular side of the membrane. A helical membrane pass occupies residues 270–290 (MMVSIFYSIVIPMLNPLIYSL). Over 291-310 (RNKDVKEAIKKVFGKRILCG) the chain is Cytoplasmic.

The protein belongs to the G-protein coupled receptor 1 family.

The protein localises to the cell membrane. Its function is as follows. Potential odorant receptor. This Mus musculus (Mouse) protein is Olfactory receptor 5T7.